The primary structure comprises 239 residues: Uracil-DNA glycosylase (239 aa).

Asp65 functions as the Proton acceptor in the catalytic mechanism.

The protein belongs to the uracil-DNA glycosylase (UDG) superfamily. UNG family.

The protein localises to the cytoplasm. It carries out the reaction Hydrolyzes single-stranded DNA or mismatched double-stranded DNA and polynucleotides, releasing free uracil.. Functionally, excises uracil residues from the DNA which can arise as a result of misincorporation of dUMP residues by DNA polymerase or due to deamination of cytosine. This Levilactobacillus brevis (strain ATCC 367 / BCRC 12310 / CIP 105137 / JCM 1170 / LMG 11437 / NCIMB 947 / NCTC 947) (Lactobacillus brevis) protein is Uracil-DNA glycosylase.